A 536-amino-acid polypeptide reads, in one-letter code: Probable cytochrome P450 520A1 (536 aa).

A helical transmembrane segment spans residues 1 to 21 (MEILTFIIYLITFFILFDFYK). C479 serves as a coordination point for heme.

This sequence belongs to the cytochrome P450 family. Heme serves as cofactor.

It is found in the membrane. The sequence is that of Probable cytochrome P450 520A1 (cyp520A1) from Dictyostelium discoideum (Social amoeba).